The primary structure comprises 39 residues: Phosphatase RapI inhibitor (39 aa).

The propeptide occupies 1 to 34 (MKISRILLAAVILSSVFSITYLQSDHNTEIKVAA).

It belongs to the Phr family. Contains a predicted signal peptide cleavage site in the N-terminal region, however the propeptide is probably subject to only one processing event, at the N-terminal end of the mature peptide.

It localises to the secreted. Its subcellular location is the cytoplasm. Its function is as follows. Intercellular signaling molecule that inhibits excision of the mobile genetic element ICEBs1 when cells are crowded by cells that contain ICEBs1 and produce the PhrI peptide. Secreted during production, but the mature peptide acts intracellularly, indicating that it needs to be imported into the cell to function. Acts by inhibiting RapI activity. The protein is Phosphatase RapI inhibitor (phrI) of Bacillus subtilis (strain 168).